A 150-amino-acid chain; its full sequence is L-alanine exporter AlaE (150 aa).

4 helical membrane passes run 17–37 (FAMVVFCFVTGMIIEIFVSGM), 48–68 (LSIPVNIAIAWPYGVFRDYVL), 86–106 (LVAYVLFQSPVYAAILFTVGA), and 111–131 (IITAVATNALVSCGMGVLYGY).

The protein belongs to the AlaE exporter family.

It localises to the cell inner membrane. Functionally, exports L-alanine. This is L-alanine exporter AlaE from Vibrio cholerae serotype O1 (strain ATCC 39315 / El Tor Inaba N16961).